A 364-amino-acid chain; its full sequence is Phosphate acyltransferase (364 aa).

The interval Ile-343 to Ala-364 is disordered.

It belongs to the PlsX family. As to quaternary structure, homodimer. Probably interacts with PlsY.

The protein resides in the cytoplasm. The catalysed reaction is a fatty acyl-[ACP] + phosphate = an acyl phosphate + holo-[ACP]. Its pathway is lipid metabolism; phospholipid metabolism. Catalyzes the reversible formation of acyl-phosphate (acyl-PO(4)) from acyl-[acyl-carrier-protein] (acyl-ACP). This enzyme utilizes acyl-ACP as fatty acyl donor, but not acyl-CoA. This chain is Phosphate acyltransferase, found in Novosphingobium aromaticivorans (strain ATCC 700278 / DSM 12444 / CCUG 56034 / CIP 105152 / NBRC 16084 / F199).